Here is a 158-residue protein sequence, read N- to C-terminus: Secreted frizzled-related protein 1 (158 aa).

The FZ domain maps to valine 1–methionine 34. An N-linked (GlcNAc...) asparagine glycan is attached at asparagine 38. 2 cysteine pairs are disulfide-bonded: cysteine 51/cysteine 121 and cysteine 68/cysteine 123. The NTR domain occupies cysteine 51–glutamate 158.

The protein belongs to the secreted frizzled-related protein (sFRP) family. Interacts with WNT4, WNT1, WNT2, WNT8, MYOC and FRZD6.

Its subcellular location is the secreted. In terms of biological role, soluble frizzled-related proteins (sFRPS) function as modulators of Wnt signaling through direct interaction with Wnts. They have a role in regulating cell growth and differentiation in specific cell types. SFRP1 decreases intracellular beta-catenin levels. Has antiproliferative effects on vascular cells, in vitro and in vivo, and can induce, in vivo, an angiogenic response. In vascular cell cycle, delays the G1 phase and entry into the S phase. In kidney development, inhibits tubule formation and bud growth in metanephroi. Inhibits WNT1/WNT4-mediated TCF-dependent transcription. The polypeptide is Secreted frizzled-related protein 1 (Sfrp1) (Rattus norvegicus (Rat)).